Reading from the N-terminus, the 556-residue chain is Probable zinc metalloprotease EGY2, chloroplastic (556 aa).

The N-terminal 64 residues, 1–64 (MNLAVASFRG…VFRKRETLVR (64 aa)), are a transit peptide targeting the chloroplast. The disordered stretch occupies residues 63 to 133 (VRVTETQTEP…DGDKLEVSSG (71 aa)). 7 helical membrane-spanning segments follow: residues 267-287 (AVPE…TLFL), 311-331 (LPGA…HILV), 336-356 (GIKL…FGAI), 374-394 (AAGP…GLFV), 437-457 (PLVI…IPAG), 484-504 (LLGL…LIFF), and 527-547 (LGIL…FAFT).

Belongs to the peptidase M50B family.

It localises to the plastid. It is found in the chloroplast membrane. Its function is as follows. Probable membrane-associated metalloprotease that may be involved in chloroplast development. The polypeptide is Probable zinc metalloprotease EGY2, chloroplastic (EGY2) (Arabidopsis thaliana (Mouse-ear cress)).